The following is a 301-amino-acid chain: Probable serine acetyltransferase 3 (301 aa).

The segment at 280–301 (IGKKAEPQRELPGVTMEQRWSD) is disordered.

The protein belongs to the transferase hexapeptide repeat family. Homomultimer.

It catalyses the reaction L-serine + acetyl-CoA = O-acetyl-L-serine + CoA. It functions in the pathway amino-acid biosynthesis; L-cysteine biosynthesis; L-cysteine from L-serine: step 1/2. This Oryza sativa subsp. japonica (Rice) protein is Probable serine acetyltransferase 3 (SAT3).